The sequence spans 289 residues: N-acetylmuramoyl-L-alanine amidase AmiA (289 aa).

The tat-type signal signal peptide spans Met-1–Ala-34. The segment at Leu-39–Pro-63 is disordered. The span at Ser-46–Gly-55 shows a compositional bias: basic residues. Positions Val-59–Ile-273 constitute a MurNAc-LAA domain.

It belongs to the N-acetylmuramoyl-L-alanine amidase 3 family. In terms of processing, exported by the Tat system. The position of the signal peptide cleavage has not been experimentally proven. Can also be exported by the Sec system.

The protein localises to the periplasm. It catalyses the reaction Hydrolyzes the link between N-acetylmuramoyl residues and L-amino acid residues in certain cell-wall glycopeptides.. Cell-wall hydrolase involved in septum cleavage during cell division. Can also act as powerful autolysin in the presence of murein synthesis inhibitors. The polypeptide is N-acetylmuramoyl-L-alanine amidase AmiA (amiA) (Escherichia coli (strain K12)).